Consider the following 439-residue polypeptide: Acyl-coenzyme A thioesterase 9, mitochondrial (439 aa).

Residues 1–21 (MKRAAIRLWTLNKGLLTHGRG) constitute a mitochondrion transit peptide. 2 consecutive HotDog ACOT-type domains span residues 85–209 (SYIE…RDSE) and 289–401 (EDTK…EKEV). Lysine 102 carries the N6-acetyllysine modification.

The protein belongs to the acyl coenzyme A hydrolase family. Interacts with NYAP1, NYAP2 and MYO16. Widely expressed.

It is found in the mitochondrion. The protein localises to the mitochondrion matrix. Its subcellular location is the mitochondrion inner membrane. The catalysed reaction is butanoyl-CoA + H2O = butanoate + CoA + H(+). It carries out the reaction propanoyl-CoA + H2O = propanoate + CoA + H(+). It catalyses the reaction hexadecanoyl-CoA + H2O = hexadecanoate + CoA + H(+). The enzyme catalyses octanoyl-CoA + H2O = octanoate + CoA + H(+). The catalysed reaction is decanoyl-CoA + H2O = decanoate + CoA + H(+). It carries out the reaction tetradecanoyl-CoA + H2O = tetradecanoate + CoA + H(+). It catalyses the reaction 4,8-dimethylnonanoyl-CoA + H2O = 4,8-dimethylnonanoate + CoA + H(+). The enzyme catalyses 3-methylbutanoyl-CoA + H2O = 3-methylbutanoate + CoA + H(+). The catalysed reaction is 2-methylpropanoyl-CoA + H2O = 2-methylpropanoate + CoA + H(+). Its pathway is lipid metabolism; fatty acid metabolism. Strongly inhibited by NADH and CoA. Mitochondrial acyl-CoA thioesterase. Catalyzes the hydrolysis of acyl-CoAs into free fatty acids and coenzyme A (CoA), regulating their respective intracellular levels. Shows a clear preference for hydrophobic short-, medium-, and long-chain saturated acyl-CoAs with some activity also with short-chain dicarboxylic CoA esters. Regulates both mitochondrial lipid and amino acid metabolism. In Mus musculus (Mouse), this protein is Acyl-coenzyme A thioesterase 9, mitochondrial (Acot9).